We begin with the raw amino-acid sequence, 207 residues long: Outer-membrane lipoprotein LolB (207 aa).

An N-terminal signal peptide occupies residues 1 to 21; it reads MTLPDFRLIRLLPLASLVLTA. C22 is lipidated: N-palmitoyl cysteine. C22 carries the S-diacylglycerol cysteine lipid modification.

Belongs to the LolB family. Monomer.

The protein resides in the cell outer membrane. Its function is as follows. Plays a critical role in the incorporation of lipoproteins in the outer membrane after they are released by the LolA protein. The sequence is that of Outer-membrane lipoprotein LolB from Citrobacter koseri (strain ATCC BAA-895 / CDC 4225-83 / SGSC4696).